The following is a 145-amino-acid chain: Large ribosomal subunit protein uL16 (145 aa).

Belongs to the universal ribosomal protein uL16 family. In terms of assembly, part of the 50S ribosomal subunit.

In terms of biological role, binds 23S rRNA and is also seen to make contacts with the A and possibly P site tRNAs. The chain is Large ribosomal subunit protein uL16 from Exiguobacterium sp. (strain ATCC BAA-1283 / AT1b).